The following is a 213-amino-acid chain: Ras-like protein rasX (213 aa).

16-23 serves as a coordination point for GTP; that stretch reads GDGGVGKT. Positions 38-46 match the Effector region motif; it reads YDPTIEDSY. GTP contacts are provided by residues 63–67 and 122–125; these read DTAGQ and NKSD. Cys210 carries the post-translational modification Cysteine methyl ester. Cys210 carries S-geranylgeranyl cysteine lipidation. A propeptide spans 211–213 (removed in mature form); it reads KMM.

The protein belongs to the small GTPase superfamily. Ras family.

It is found in the cell membrane. The catalysed reaction is GTP + H2O = GDP + phosphate + H(+). Functionally, ras proteins bind GDP/GTP and possess intrinsic GTPase activity. In Dictyostelium discoideum (Social amoeba), this protein is Ras-like protein rasX (rasX).